A 135-amino-acid chain; its full sequence is Small ribosomal subunit protein bS6 (135 aa).

The segment covering 99-120 has biased composition (polar residues); sequence QHSSLGRSTAPANPMASNTPRT. Residues 99–135 form a disordered region; it reads QHSSLGRSTAPANPMASNTPRTEGQEQAKTEPQTAPA.

The protein belongs to the bacterial ribosomal protein bS6 family.

Functionally, binds together with bS18 to 16S ribosomal RNA. This chain is Small ribosomal subunit protein bS6, found in Synechococcus sp. (strain RCC307).